The sequence spans 345 residues: ATP-dependent kinase YFH7 (345 aa).

Position 31 to 39 (31 to 39) interacts with ATP; the sequence is GPPGSGKST.

The protein belongs to the YFH7 family.

Its function is as follows. ATP-dependent kinase that could be involved in endoplasmic reticulum membrane assembly. The chain is ATP-dependent kinase YFH7 (YFH7) from Candida glabrata (strain ATCC 2001 / BCRC 20586 / JCM 3761 / NBRC 0622 / NRRL Y-65 / CBS 138) (Yeast).